The primary structure comprises 298 residues: Hydroxymethylglutaryl-CoA lyase, mitochondrial (298 aa).

The Pyruvate carboxyltransferase domain maps to Val-6–Met-273. Arg-14 serves as a coordination point for substrate. An a divalent metal cation-binding site is contributed by Asp-15. An N6-acetyllysine modification is found at Lys-21. Residues His-206 and His-208 each contribute to the a divalent metal cation site. Cys-239 is an active-site residue. A divalent metal cation is bound at residue Asn-248. A Microbody targeting signal motif is present at residues Cys-296–Leu-298.

It belongs to the HMG-CoA lyase family. Homodimer; disulfide-linked. Can also form homotetramers.

It localises to the mitochondrion matrix. It is found in the peroxisome. The enzyme catalyses (3S)-3-hydroxy-3-methylglutaryl-CoA = acetoacetate + acetyl-CoA. It participates in metabolic intermediate metabolism; (S)-3-hydroxy-3-methylglutaryl-CoA degradation; acetoacetate from (S)-3-hydroxy-3-methylglutaryl-CoA: step 1/1. Functionally, mitochondrial 3-hydroxy-3-methylglutaryl-CoA lyase that catalyzes a cation-dependent cleavage of (S)-3-hydroxy-3-methylglutaryl-CoA into acetyl-CoA and acetoacetate, a key step in ketogenesis. Terminal step in leucine catabolism. Ketone bodies (beta-hydroxybutyrate, acetoacetate and acetone) are essential as an alternative source of energy to glucose, as lipid precursors and as regulators of metabolism. This is Hydroxymethylglutaryl-CoA lyase, mitochondrial (HMGCL) from Gallus gallus (Chicken).